The following is a 423-amino-acid chain: Glutamate--cysteine ligase EgtA (423 aa).

The protein belongs to the glutamate--cysteine ligase type 2 family. EgtA subfamily.

It catalyses the reaction L-cysteine + L-glutamate + ATP = gamma-L-glutamyl-L-cysteine + ADP + phosphate + H(+). It participates in amino-acid biosynthesis; ergothioneine biosynthesis. Its function is as follows. Catalyzes the synthesis of gamma-glutamylcysteine (gamma-GC). This compound is used as substrate for the biosynthesis of the low-molecular thiol compound ergothioneine. The sequence is that of Glutamate--cysteine ligase EgtA from Mycolicibacterium smegmatis (strain ATCC 700084 / mc(2)155) (Mycobacterium smegmatis).